We begin with the raw amino-acid sequence, 230 residues long: Uracil-DNA glycosylase (230 aa).

D70 (proton acceptor) is an active-site residue.

The protein belongs to the uracil-DNA glycosylase (UDG) superfamily. UNG family.

Its subcellular location is the cytoplasm. It carries out the reaction Hydrolyzes single-stranded DNA or mismatched double-stranded DNA and polynucleotides, releasing free uracil.. Functionally, excises uracil residues from the DNA which can arise as a result of misincorporation of dUMP residues by DNA polymerase or due to deamination of cytosine. The polypeptide is Uracil-DNA glycosylase (Pseudomonas entomophila (strain L48)).